A 585-amino-acid chain; its full sequence is Involucrin (585 aa).

Residues 1–15 (MSQQHTLPVTLSPAL) show a composition bias toward polar residues. The tract at residues 1 to 132 (MSQQHTLPVT…LEEEKKLLDQ (132 aa)) is disordered. Residue Gln-79 is the site of Omega-hydroxyceramide glutamate ester attachment. The segment covering 92 to 115 (WEQHEEYQKAENPEQQLKQEKTQR) has biased composition (basic and acidic residues). 2 omega-hydroxyceramide glutamate ester lipidation sites follow: Gln-118 and Gln-133. Residues 149–540 (KEQLLELPEQ…KDLEQQKGQL (392 aa)) form a disordered region. Repeat copies occupy residues 153–162 (LELPEQQEGH), 163–172 (LKHLEQQEGQ), 173–182 (LKHPEQQEGQ), 183–192 (LELPEQQEGQ), 193–202 (LELPEQQEGQ), 203–212 (LELPEQQEGQ), 213–222 (LELPEQQEGQ), 223–232 (LELPEQQEGQ), 233–242 (LELPQQQEGQ), 243–252 (LELSEQQEGQ), 253–262 (LELSEQQEGQ), 263–272 (LKHLEHQEGQ), 273–282 (LEVPEEQMGQ), 283–292 (LKYLEQQEGQ), 293–302 (LKHLDQQEKQ), 303–312 (PELPEQQMGQ), 313–322 (LKHLEQQEGQ), 323–332 (PKHLEQQEGQ), 333–342 (LEQLEEQEGQ), 343–352 (LKHLEQQEGQ), 353–362 (LEHLEHQEGQ), 363–372 (LGLPEQQVLQ), and 373–382 (LKQLEKQQGQ). The 39 X 10 AA approximate tandem repeats of [LP]-[EKG]-[LHVYQEK]-[PLSQE]-[EQDV]-[QHEKRGA]-Q-[EMVQLP]-[GKLE]-[QHVNLD] stretch occupies residues 153-542 (LELPEQQEGH…LEQQKGQLEQ (390 aa)). The span at 159-178 (QEGHLKHLEQQEGQLKHPEQ) shows a compositional bias: basic and acidic residues. Low complexity predominate over residues 179 to 261 (QEGQLELPEQ…QLELSEQQEG (83 aa)). Residues 262–271 (QLKHLEHQEG) show a composition bias toward basic and acidic residues. Basic and acidic residues-rich tracts occupy residues 292-304 (QLKH…KQPE), 314-328 (KHLE…HLEQ), and 341-360 (GQLK…EHQE). Positions 361–383 (GQLGLPEQQVLQLKQLEKQQGQP) are enriched in low complexity. Residues 383–392 (PKHLEEEEGQ) form a 24; approximate repeat. The segment covering 384-393 (KHLEEEEGQL) has biased composition (basic and acidic residues). Tandem repeats lie at residues 393–402 (LKHLVQQEGQ), 403–412 (LKHLVQQEGQ), 413–422 (LEQQERQVEH), 423–432 (LEQQVGQLKH), 433–442 (LEEQEGQLKH), 443–452 (LEQQQGQLEV), 453–462 (PEQQVGQPKN), 463–472 (LEQEEKQLEL), 473–482 (PEQQEGQVKH), 483–492 (LEKQEAQLEL), and 493–502 (PEQQVGQPKH). Basic and acidic residues-rich tracts occupy residues 415–424 (QQERQVEHLE) and 431–444 (KHLE…KHLE). Residues 445-462 (QQQGQLEVPEQQVGQPKN) are compositionally biased toward low complexity. Basic and acidic residues predominate over residues 479–488 (QVKHLEKQEA). Residue Gln-496 forms an Isoglutamyl lysine isopeptide (Gln-Lys) (interchain with K-? in other proteins) linkage. Over residues 501–535 (KHLEQQEKHLEHPEQQDGQLKHLEQQEGQLKDLEQ) the composition is skewed to basic and acidic residues. The stretch at 503 to 512 (LEQQEKHLEH) is one 36; approximate repeat. 2 repeat units span residues 513-522 (PEQQDGQLKH) and 523-532 (LEQQEGQLKD). Residues 533–542 (LEQQKGQLEQ) form a 39; approximate repeat.

The protein belongs to the involucrin family. Directly or indirectly cross-linked to cornifelin (CNFN). In terms of processing, substrate of transglutaminase. Some glutamines and lysines are cross-linked to other involucrin molecules, to other proteins such as keratin, desmoplakin, periplakin and envoplakin, and to lipids like omega-hydroxyceramide. As to expression, keratinocytes of epidermis and other stratified squamous epithelia.

It is found in the cytoplasm. In terms of biological role, part of the insoluble cornified cell envelope (CE) of stratified squamous epithelia. The chain is Involucrin (IVL) from Homo sapiens (Human).